The primary structure comprises 704 residues: MDASPEPQQKGGTLVLVRRQPPVSQGLLETLKARLKKSCTCSMPCAQALVQGLFPAIHWLPQYRLKEYLAGDVMSGLVIGIILVPQAIAYSLLAGLQPIYSLYTSFFANLIYFLMGTSRHVNVGIFSLLCLMVGQVVDRELQLAGFDPSQDSLGPKNNDSTLNNSATTLIIGLQDCRRDCYAIRVATALTLMAGLYQVLMGILRLGFVSTYLSQPLLDGFAMGASVTILTSQAKHMLGVQIPRHQGLGMVVHTWLSLLQNVGQANICDVVTSALCLGVLLAAKELSDRYRHRLKVPIPTELFVIVVATIVSHFGQLHTRFDSRVAGNIPTGFVAPQVPDPKIMWRVALDAMSLALVGSAFSISLAEMFARSHGYSVSANQELLAVGCCNVLPAFFHCFATSAALSKTLVKIATGCQTQLSSVVSAAVVLLVLLVLAPLFHDLQRCVLACIIVVSLRGALRKVKDLPQLWRLSPADALVWVATAATCVLVSTEAGLLAGVFFSLLSLAGRTQRPRAALLARIGDSTFYEDAAEFEGLLPPPEVRVFRFTGPLYYANKDFFLRSLYRLTGLDAGHSATRKDQGPEVGVSNRSLVDGKDLGSVSSGAGLVVPLAFGFHTVVIDCAPLLFLDVAGMATLKDLRRDYRALDITLLLACCSPSVRDTLRKGGFLGEEQGAENELLFPSVHSAVEAACARREELLAADSAL.

At Thr-13 the chain carries Phosphothreonine. 2 consecutive transmembrane segments (helical) span residues 68-90 (YLAG…AIAY) and 94-116 (AGLQ…FLMG). Residues Asn-158 and Asn-163 are each glycosylated (N-linked (GlcNAc...) asparagine). The next 7 membrane-spanning stretches (helical) occupy residues 185–207 (VATA…RLGF), 260–282 (NVGQ…LLAA), 295–314 (VPIP…SHFG), 347–369 (ALDA…EMFA), 382–404 (LLAV…SAAL), 417–439 (TQLS…APLF), and 477–499 (LVWV…LAGV). An STAS domain is found at 532-690 (EFEGLLPPPE…PSVHSAVEAA (159 aa)). A Phosphoserine modification is found at Ser-587. N-linked (GlcNAc...) asparagine glycosylation occurs at Asn-588. Ser-590 carries the phosphoserine modification.

It belongs to the SLC26A/SulP transporter (TC 2.A.53) family. As to expression, expressed in the heart, cecum, calvaria, brain, liver, skeletal muscle and kidney.

It localises to the cell membrane. The protein resides in the basolateral cell membrane. It catalyses the reaction thiosulfate(in) + sulfate(out) = thiosulfate(out) + sulfate(in). The enzyme catalyses 2 hydrogencarbonate(out) + sulfate(in) = 2 hydrogencarbonate(in) + sulfate(out). The catalysed reaction is oxalate(in) + sulfate(out) = oxalate(out) + sulfate(in). It carries out the reaction oxalate(in) + 2 hydrogencarbonate(out) = oxalate(out) + 2 hydrogencarbonate(in). Its function is as follows. Sodium-independent sulfate anion transporter. Can transport other anions including bicarbonate, thiosulfate and oxalate by mediating sulfate-hydrogencarbonate, sulfate-oxalate and oxalate-hydrogencarbonate anion exchange. Mediates sulfate-thiosulfate anion exchange. The protein is Sulfate anion transporter 1 (Slc26a1) of Mus musculus (Mouse).